Consider the following 210-residue polypeptide: dTTP/UTP pyrophosphatase (210 aa).

Catalysis depends on Asp89, which acts as the Proton acceptor.

Belongs to the Maf family. YhdE subfamily. The cofactor is a divalent metal cation.

The protein localises to the cytoplasm. The catalysed reaction is dTTP + H2O = dTMP + diphosphate + H(+). The enzyme catalyses UTP + H2O = UMP + diphosphate + H(+). Nucleoside triphosphate pyrophosphatase that hydrolyzes dTTP and UTP. May have a dual role in cell division arrest and in preventing the incorporation of modified nucleotides into cellular nucleic acids. This chain is dTTP/UTP pyrophosphatase, found in Burkholderia orbicola (strain AU 1054).